Here is a 315-residue protein sequence, read N- to C-terminus: Tyrosine--tRNA ligase (315 aa).

Tyr32 provides a ligand contact to L-tyrosine. A 'HIGH' region motif is present at residues 37–45 (PSGEIHLGH). Positions 152, 156, 159, and 174 each coordinate L-tyrosine. Residues 208–212 (KMSSS) carry the 'KMSKS' region motif. Residue Ser211 participates in ATP binding.

The protein belongs to the class-I aminoacyl-tRNA synthetase family. TyrS type 3 subfamily. In terms of assembly, homodimer.

The protein resides in the cytoplasm. The enzyme catalyses tRNA(Tyr) + L-tyrosine + ATP = L-tyrosyl-tRNA(Tyr) + AMP + diphosphate + H(+). Catalyzes the attachment of tyrosine to tRNA(Tyr) in a two-step reaction: tyrosine is first activated by ATP to form Tyr-AMP and then transferred to the acceptor end of tRNA(Tyr). In Methanoculleus marisnigri (strain ATCC 35101 / DSM 1498 / JR1), this protein is Tyrosine--tRNA ligase.